Here is a 311-residue protein sequence, read N- to C-terminus: Apolipoprotein E (311 aa).

The signal sequence occupies residues M1–A18. A run of 8 repeats spans residues A72–G93, P94–G115, A116–G137, Q138–M159, R160–E181, R182–A203, N204–R225, and G226–E247. The interval A72–E247 is 8 X 22 AA approximate tandem repeats. Residue M135 is modified to Methionine sulfoxide. A Phosphoserine modification is found at S139. The segment at H150 to R160 is LDL and other lipoprotein receptors binding. Residue M154–R157 participates in heparin binding. The segment at T202–M282 is lipid-binding and lipoprotein association. G221–L228 is a heparin binding site. The segment at Q258 to Q311 is homooligomerization. Residues R270 to M282 form a specificity for association with VLDL region.

The protein belongs to the apolipoprotein A1/A4/E family. Homotetramer. May interact with ABCA1; functionally associated with ABCA1 in the biogenesis of HDLs. May interact with APP/A4 amyloid-beta peptide; the interaction is extremely stable in vitro but its physiological significance is unclear. May interact with MAPT. May interact with MAP2. In the cerebrospinal fluid, interacts with secreted SORL1. Interacts with PMEL; this allows the loading of PMEL luminal fragment on ILVs to induce fibril nucleation. In terms of processing, APOE exists as multiple glycosylated and sialylated glycoforms within cells and in plasma. The extent of glycosylation and sialylation are tissue and context specific. Glycated in plasma VLDL. Post-translationally, phosphorylated by FAM20C in the extracellular medium.

Its subcellular location is the secreted. It localises to the extracellular space. The protein resides in the extracellular matrix. It is found in the extracellular vesicle. The protein localises to the endosome. Its subcellular location is the multivesicular body. Its function is as follows. APOE is an apolipoprotein, a protein associating with lipid particles, that mainly functions in lipoprotein-mediated lipid transport between organs via the plasma and interstitial fluids. APOE is a core component of plasma lipoproteins and is involved in their production, conversion and clearance. Apolipoproteins are amphipathic molecules that interact both with lipids of the lipoprotein particle core and the aqueous environment of the plasma. As such, APOE associates with chylomicrons, chylomicron remnants, very low density lipoproteins (VLDL) and intermediate density lipoproteins (IDL) but shows a preferential binding to high-density lipoproteins (HDL). It also binds a wide range of cellular receptors including the LDL receptor/LDLR and the very low-density lipoprotein receptor/VLDLR that mediate the cellular uptake of the APOE-containing lipoprotein particles. Finally, APOE also has a heparin-binding activity and binds heparan-sulfate proteoglycans on the surface of cells, a property that supports the capture and the receptor-mediated uptake of APOE-containing lipoproteins by cells. The protein is Apolipoprotein E (Apoe) of Mus musculus (Mouse).